Reading from the N-terminus, the 557-residue chain is 2-isopropylmalate synthase (557 aa).

One can recognise a Pyruvate carboxyltransferase domain in the interval 33 to 307 (PLWLSTDLRD…DPGLDFSDID (275 aa)). Positions 42, 246, 248, and 282 each coordinate Mg(2+). The interval 439–557 (AETPYALKGH…LGQQASIRAA (119 aa)) is regulatory domain.

It belongs to the alpha-IPM synthase/homocitrate synthase family. LeuA type 2 subfamily. As to quaternary structure, homodimer. Mg(2+) serves as cofactor.

It is found in the cytoplasm. The enzyme catalyses 3-methyl-2-oxobutanoate + acetyl-CoA + H2O = (2S)-2-isopropylmalate + CoA + H(+). It functions in the pathway amino-acid biosynthesis; L-leucine biosynthesis; L-leucine from 3-methyl-2-oxobutanoate: step 1/4. In terms of biological role, catalyzes the condensation of the acetyl group of acetyl-CoA with 3-methyl-2-oxobutanoate (2-ketoisovalerate) to form 3-carboxy-3-hydroxy-4-methylpentanoate (2-isopropylmalate). The chain is 2-isopropylmalate synthase from Azotobacter vinelandii (strain DJ / ATCC BAA-1303).